A 433-amino-acid chain; its full sequence is Leucine-rich repeat extensin-like protein 7 (433 aa).

The N-terminal stretch at 1-21 is a signal peptide; the sequence is MRIYQPTLLIFTTVVLLSISA. Asn-71 is a glycosylation site (N-linked (GlcNAc...) asparagine). LRR repeat units follow at residues 98-122, 123-145, 146-170, 171-194, 196-217, 219-239, 241-265, 266-289, and 290-313; these read VKTV…LGLL, TDIA…GFSQ, LSLL…VIGL, PKLK…LFDK, LDAL…MGNS, VSVL…SFGK, GKTL…MGLL, QNVT…MGQM, and ENLE…LCSL. An N-linked (GlcNAc...) asparagine glycan is attached at Asn-267. N-linked (GlcNAc...) asparagine glycosylation is present at Asn-340. The tract at residues 380–433 is disordered; the sequence is FSPPPSQISPSSQPLAPAPSPTSPPLSTPPPARPCPPVYSPPPPPPLSLAPSMN. The tract at residues 381 to 433 is contains the Ser-Pro(4) repeats; it reads SPPPSQISPSSQPLAPAPSPTSPPLSTPPPARPCPPVYSPPPPPPLSLAPSMN. The segment covering 395–427 has biased composition (pro residues); it reads APAPSPTSPPLSTPPPARPCPPVYSPPPPPPLS.

Hydroxylated on proline residues in the S-P-P-P-P repeat. In terms of processing, O-glycosylated on hydroxyprolines. Expressed in flowers and pollen.

It localises to the secreted. The protein localises to the cell wall. Modulates cell morphogenesis by regulating cell wall formation and assembly, and/or growth polarization. The chain is Leucine-rich repeat extensin-like protein 7 (LRX7) from Arabidopsis thaliana (Mouse-ear cress).